The chain runs to 96 residues: Putative membrane protein insertion efficiency factor (96 aa).

It belongs to the UPF0161 family.

The protein localises to the cell inner membrane. In terms of biological role, could be involved in insertion of integral membrane proteins into the membrane. In Borreliella afzelii (strain PKo) (Borrelia afzelii), this protein is Putative membrane protein insertion efficiency factor.